The sequence spans 488 residues: GTPase Der (488 aa).

EngA-type G domains are found at residues Pro-3–Met-166 and Ile-199–Thr-372. GTP is bound by residues Gly-9–Ser-16, Asp-56–Ile-60, Asn-118–Asp-121, Gly-205–Ser-212, Asp-252–Val-256, and Asn-317–Asp-320. The 85-residue stretch at Arg-373–Asp-457 folds into the KH-like domain. The disordered stretch occupies residues Phe-460–Lys-488. A compositionally biased stretch (basic residues) spans Arg-473–Lys-488.

Belongs to the TRAFAC class TrmE-Era-EngA-EngB-Septin-like GTPase superfamily. EngA (Der) GTPase family. In terms of assembly, associates with the 50S ribosomal subunit.

In terms of biological role, GTPase that plays an essential role in the late steps of ribosome biogenesis. The polypeptide is GTPase Der (Shewanella baltica (strain OS155 / ATCC BAA-1091)).